Here is a 359-residue protein sequence, read N- to C-terminus: Guanine nucleotide-binding protein subunit alpha-11 (359 aa).

2 S-palmitoyl cysteine lipidation sites follow: cysteine 9 and cysteine 10. Positions arginine 38–valine 359 constitute a G-alpha domain. Residues lysine 41–threonine 54 form a G1 motif region. Residues glycine 46–serine 53 and leucine 180–arginine 183 contribute to the GTP site. Serine 53 contributes to the Mg(2+) binding site. Residues aspartate 178 to threonine 186 form a G2 motif region. Threonine 186 contributes to the Mg(2+) binding site. A G3 motif region spans residues phenylalanine 201 to arginine 210. The residue at position 209 (glutamine 209) is a Deamidated glutamine; by Photorhabdus PAU_02230. The G4 motif stretch occupies residues isoleucine 270–aspartate 277. GTP contacts are provided by residues asparagine 274 to aspartate 277 and alanine 331. Residues threonine 329–threonine 334 are G5 motif.

Belongs to the G-alpha family. G(q) subfamily. G proteins are composed of 3 units; alpha, beta and gamma. The alpha chain contains the guanine nucleotide binding site. Interacts with RGS22. Interacts with NTSR1. In terms of assembly, (Microbial infection) Interacts with human cytomegalovirus (HHV-5) US28. In terms of processing, (Microbial infection) Deamidated at Gln-209 by Photorhabdus asymbiotica toxin PAU_02230, blocking GTP hydrolysis of heterotrimeric GNAQ or GNA11 and G-alphai (GNAI1, GNAI2 or GNAI3) proteins, thereby activating RhoA. As to expression, expressed in testis.

The protein resides in the cell membrane. It is found in the cytoplasm. It carries out the reaction GTP + H2O = GDP + phosphate + H(+). In terms of biological role, guanine nucleotide-binding proteins (G proteins) function as transducers downstream of G protein-coupled receptors (GPCRs) in numerous signaling cascades. The alpha chain contains the guanine nucleotide binding site and alternates between an active, GTP-bound state and an inactive, GDP-bound state. Signaling by an activated GPCR promotes GDP release and GTP binding. The alpha subunit has a low GTPase activity that converts bound GTP to GDP, thereby terminating the signal. Both GDP release and GTP hydrolysis are modulated by numerous regulatory proteins. Signaling is mediated via phospholipase C-beta-dependent inositol lipid hydrolysis for signal propagation: activates phospholipase C-beta: following GPCR activation, GNA11 activates PLC-beta (PLCB1, PLCB2, PLCB3 or PLCB4), leading to production of diacylglycerol (DAG) and inositol 1,4,5-trisphosphate (IP3). Transduces FFAR4 signaling in response to long-chain fatty acids (LCFAs). Together with GNAQ, required for heart development. In the respiratory epithelium, transmits OXGR1-dependent signals that lead to downstream intracellular Ca(2+) release and mucocilliary clearance of airborne pathogens. The chain is Guanine nucleotide-binding protein subunit alpha-11 (GNA11) from Homo sapiens (Human).